The chain runs to 178 residues: Large ribosomal subunit protein uL5 (178 aa).

It belongs to the universal ribosomal protein uL5 family. In terms of assembly, part of the 50S ribosomal subunit; part of the 5S rRNA/L5/L18/L25 subcomplex. Contacts the 5S rRNA and the P site tRNA. Forms a bridge to the 30S subunit in the 70S ribosome.

This is one of the proteins that bind and probably mediate the attachment of the 5S RNA into the large ribosomal subunit, where it forms part of the central protuberance. In the 70S ribosome it contacts protein S13 of the 30S subunit (bridge B1b), connecting the 2 subunits; this bridge is implicated in subunit movement. Contacts the P site tRNA; the 5S rRNA and some of its associated proteins might help stabilize positioning of ribosome-bound tRNAs. This chain is Large ribosomal subunit protein uL5, found in Aliivibrio fischeri (strain ATCC 700601 / ES114) (Vibrio fischeri).